We begin with the raw amino-acid sequence, 358 residues long: Probable butyrate kinase (358 aa).

Belongs to the acetokinase family.

The protein localises to the cytoplasm. The enzyme catalyses butanoate + ATP = butanoyl phosphate + ADP. This chain is Probable butyrate kinase, found in Oceanobacillus iheyensis (strain DSM 14371 / CIP 107618 / JCM 11309 / KCTC 3954 / HTE831).